The primary structure comprises 351 residues: Autoinducer 2 import system permease protein LsrC (351 aa).

A run of 9 helical transmembrane segments spans residues 14 to 34 (LLAILTLFALLGIIDRNYFSL), 39 to 59 (MIFSSAQILILLAIGATLVML), 70 to 90 (ITGLCAVTVGMALNAGFGLAA), 93 to 113 (LFALLVGMVAGFFNGILVTWL), 115 to 135 (IPAIVATLGTLGLYRGLMLLL), 155 to 175 (ILFSISPIGWLAMLLILAMAW), 213 to 233 (MNGVMAALAGIVFASQIGFIP), 252 to 272 (GISLLGGTGTIIGAILGAFLL), and 284 to 304 (LPAWWNDFITGLVLLGVLVFD).

The protein belongs to the binding-protein-dependent transport system permease family. AraH/RbsC subfamily. In terms of assembly, the complex is composed of two ATP-binding proteins (LsrA), two transmembrane proteins (LsrC and LsrD) and a solute-binding protein (LsrB).

It is found in the cell inner membrane. Functionally, part of the ABC transporter complex LsrABCD involved in autoinducer 2 (AI-2) import. Probably responsible for the translocation of the substrate across the membrane. This chain is Autoinducer 2 import system permease protein LsrC (lsrC), found in Yersinia pseudotuberculosis serotype O:1b (strain IP 31758).